Consider the following 701-residue polypeptide: Polyribonucleotide nucleotidyltransferase (701 aa).

Residues Asp-485 and Asp-491 each coordinate Mg(2+). The 60-residue stretch at 552–611 (PKIFKTTVDPEKIRDIIGPGGKMINKIIAETNVKIDIEPDGRIFVAAPDDISGNRAISMI) folds into the KH domain. In terms of domain architecture, S1 motif spans 621-689 (GQFFLGKVTR…KLGRLSLSRK (69 aa)).

Belongs to the polyribonucleotide nucleotidyltransferase family. Mg(2+) serves as cofactor.

The protein localises to the cytoplasm. It carries out the reaction RNA(n+1) + phosphate = RNA(n) + a ribonucleoside 5'-diphosphate. In terms of biological role, involved in mRNA degradation. Catalyzes the phosphorolysis of single-stranded polyribonucleotides processively in the 3'- to 5'-direction. The chain is Polyribonucleotide nucleotidyltransferase from Caldicellulosiruptor bescii (strain ATCC BAA-1888 / DSM 6725 / KCTC 15123 / Z-1320) (Anaerocellum thermophilum).